The chain runs to 62 residues: U10-hottentoxin-Hj3a (62 aa).

Residues 1–22 (MQKLLIILILFCILKFNVDVEG) form the signal peptide. Cystine bridges form between Cys28-Cys46, Cys33-Cys59, and Cys37-Cys61.

It belongs to the short scorpion toxin superfamily. Potassium channel inhibitor family. Alpha-KTx 23 subfamily. Expressed by the venom gland.

Its subcellular location is the secreted. Its function is as follows. May block potassium channels. The sequence is that of U10-hottentoxin-Hj3a from Hottentotta judaicus (Black scorpion).